The sequence spans 105 residues: Large ribosomal subunit protein uL24 (105 aa).

It belongs to the universal ribosomal protein uL24 family. Part of the 50S ribosomal subunit.

One of two assembly initiator proteins, it binds directly to the 5'-end of the 23S rRNA, where it nucleates assembly of the 50S subunit. Functionally, one of the proteins that surrounds the polypeptide exit tunnel on the outside of the subunit. This Vibrio campbellii (strain ATCC BAA-1116) protein is Large ribosomal subunit protein uL24.